Here is a 383-residue protein sequence, read N- to C-terminus: Chaperone protein DnaJ (383 aa).

Residues 6–70 (DYYDVLGVGR…QKRAAYDQYG (65 aa)) enclose the J domain. A CR-type zinc finger spans residues 140–222 (GKETKISYSR…CHGTGREEER (83 aa)). Positions 153, 156, 170, 173, 196, 199, 210, and 213 each coordinate Zn(2+). 4 CXXCXGXG motif repeats span residues 153-160 (CHTCHGSG), 170-177 (CHKCHGAG), 196-203 (CDVCGGTG), and 210-217 (CDTCHGTG).

The protein belongs to the DnaJ family. In terms of assembly, homodimer. Requires Zn(2+) as cofactor.

The protein resides in the cytoplasm. Functionally, participates actively in the response to hyperosmotic and heat shock by preventing the aggregation of stress-denatured proteins and by disaggregating proteins, also in an autonomous, DnaK-independent fashion. Unfolded proteins bind initially to DnaJ; upon interaction with the DnaJ-bound protein, DnaK hydrolyzes its bound ATP, resulting in the formation of a stable complex. GrpE releases ADP from DnaK; ATP binding to DnaK triggers the release of the substrate protein, thus completing the reaction cycle. Several rounds of ATP-dependent interactions between DnaJ, DnaK and GrpE are required for fully efficient folding. Also involved, together with DnaK and GrpE, in the DNA replication of plasmids through activation of initiation proteins. This chain is Chaperone protein DnaJ, found in Latilactobacillus sakei subsp. sakei (strain 23K) (Lactobacillus sakei subsp. sakei).